Consider the following 141-residue polypeptide: ATP synthase epsilon chain (141 aa).

The protein belongs to the ATPase epsilon chain family. As to quaternary structure, F-type ATPases have 2 components, CF(1) - the catalytic core - and CF(0) - the membrane proton channel. CF(1) has five subunits: alpha(3), beta(3), gamma(1), delta(1), epsilon(1). CF(0) has three main subunits: a, b and c.

It localises to the cell inner membrane. Its function is as follows. Produces ATP from ADP in the presence of a proton gradient across the membrane. The polypeptide is ATP synthase epsilon chain (Bordetella petrii (strain ATCC BAA-461 / DSM 12804 / CCUG 43448)).